The following is an 890-amino-acid chain: Putative RNA-binding protein 15B (890 aa).

The tract at residues 1–133 (MKRQSERDSS…AEPACPGSSA (133 aa)) is disordered. The span at 10-20 (SPSGRGSSSSA) shows a compositional bias: low complexity. Basic and acidic residues-rich tracts occupy residues 22–34 (RPRE…EAGG) and 66–78 (GHRD…DANH). The segment covering 86 to 99 (SGSGAGGGGRGGKA) has biased composition (gly residues). Phosphoserine occurs at positions 109 and 113. Positions 113–124 (SPLPPPPPPPGA) are enriched in pro residues. The region spanning 139–219 (KTLLISSLSP…RPLKVEPVYL (81 aa)) is the RRM 1 domain. Residue K213 forms a Glycyl lysine isopeptide (Lys-Gly) (interchain with G-Cter in SUMO2) linkage. Residues 219–253 (LRGGGGSSRRSSSSSAAASTPPPGPPAPADPLGYL) are disordered. The span at 226-237 (SRRSSSSSAAAS) shows a compositional bias: low complexity. Pro residues predominate over residues 238–247 (TPPPGPPAPA). Phosphoserine occurs at positions 265 and 267. 2 RRM domains span residues 337–414 (RNLF…YGKA) and 418–492 (TRLW…FAKA). T532 carries the phosphothreonine modification. The segment at 547–705 (EGDWTSPSKS…KPLEEPKHET (159 aa)) is disordered. Phosphoserine is present on residues S552, S556, and S562. Basic and acidic residues-rich tracts occupy residues 573–616 (RSGE…ERSR) and 626–646 (RGSD…EGTK). The Nuclear localization signal motif lies at 593–597 (RRKRR). Residues 647-657 (ESSSNSLSNSR) are compositionally biased toward low complexity. The segment covering 671-703 (EAADSSHGKKARDSERNHRTTEAEPKPLEEPKH) has biased composition (basic and acidic residues). A Glycyl lysine isopeptide (Lys-Gly) (interchain with G-Cter in SUMO2) cross-link involves residue K702. The 179-residue stretch at 711 to 889 (LSEYAQTLQL…HMVIVIVRDT (179 aa)) folds into the SPOC domain. The segment at 722–890 (WNGLLVLKNS…MVIVIVRDTA (169 aa)) is interaction with Epstein-Barr virus BMLF1.

It belongs to the RRM Spen family. As to quaternary structure, component of the WMM complex, a N6-methyltransferase complex composed of a catalytic subcomplex, named MAC, and of an associated subcomplex, named MACOM. The MAC subcomplex is composed of METTL3 and METTL14. The MACOM subcomplex is composed of WTAP, ZC3H13, CBLL1/HAKAI, VIRMA, and, in some cases of RBM15 (RBM15 or RBM15B). May interact with NCOR2. Interacts with NXF1, the interaction is required to promote mRNA export. In terms of assembly, (Microbial infection) Interacts (via the SPOC domain) with Epstein-Barr virus BMLF1 (via the N-terminus); the interaction is direct. In terms of tissue distribution, ubiquitously expressed.

It localises to the nucleus. Its subcellular location is the nucleoplasm. The protein resides in the nucleus speckle. It is found in the nucleus envelope. Functionally, RNA-binding protein that acts as a key regulator of N6-methyladenosine (m6A) methylation of RNAs, thereby regulating different processes, such as alternative splicing of mRNAs and X chromosome inactivation mediated by Xist RNA. Associated component of the WMM complex, a complex that mediates N6-methyladenosine (m6A) methylation of RNAs, a modification that plays a role in the efficiency of mRNA splicing and RNA processing. Plays a key role in m6A methylation, possibly by binding target RNAs and recruiting the WMM complex. Involved in random X inactivation mediated by Xist RNA: acts by binding Xist RNA and recruiting the WMM complex, which mediates m6A methylation, leading to target YTHDC1 reader on Xist RNA and promoting transcription repression activity of Xist. Functions in the regulation of alternative or illicit splicing, possibly by regulating m6A methylation. Inhibits pre-mRNA splicing. Also functions as a mRNA export factor by acting as a cofactor for the nuclear export receptor NXF1. In Homo sapiens (Human), this protein is Putative RNA-binding protein 15B.